The primary structure comprises 169 residues: Secreted LysM effector Blys5 (169 aa).

Residues 1-19 (MKLSVISAVFVSLAAAAAA) form the signal peptide. LysM domains lie at 47 to 94 (TYYQ…YYCV) and 121 to 167 (QWYK…NVCV).

It belongs to the secreted LysM effector family.

In terms of biological role, secreted effector that enables the plant pathogenic fungus to manipulate host defenses for successful infection. Required for the full virulence to infect insect hosts. Protects fungal hyphae against the hydrolytic activity of chitinase and plays an important role in evasion of insect immunities. Binds chitin and can additionally bind chitosan and cellulose. Coats and protects the cell walls of insect pathogens from host cell recognition and additionally shields fungal cells from the hydrolysis of insect chitinases. The chain is Secreted LysM effector Blys5 from Beauveria bassiana (strain ARSEF 2860) (White muscardine disease fungus).